Reading from the N-terminus, the 201-residue chain is Myosin regulatory light chain 2 (201 aa).

The disordered stretch occupies residues 1–48 (MADKDKKVKKKKAKEDAPAEEAPAAAAPAGDRQSSRGSRKAKRTGSNV). Residues 20–29 (EEAPAAAAPA) are compositionally biased toward low complexity. Serine 46 carries the post-translational modification Phosphoserine. 3 consecutive EF-hand domains span residues 55 to 90 (KQVA…LGRL), 125 to 158 (DEDD…WGDK), and 159 to 194 (FSAD…SAEE). Residues aspartate 68, aspartate 70, aspartate 72, and aspartate 79 each coordinate Ca(2+).

In terms of assembly, myosin is a hexamer of 2 heavy chains and 4 light chains.

In Bombyx mori (Silk moth), this protein is Myosin regulatory light chain 2.